Reading from the N-terminus, the 594-residue chain is Potassium-transporting ATPase potassium-binding subunit (594 aa).

The next 10 membrane-spanning stretches (helical) occupy residues 3–23 (ADFLGLLLLYLAILLCAAPLL), 67–87 (AVAMLVFNVLGVLAVYALQRL), 136–156 (ALTVQNFVSAATGIAVLIALV), 179–199 (LYVLLPLSFILALALVSQGVV), 287–307 (LEMLAILLIPAALCWTFGEMV), 314–334 (VAILAAMTVLFAGFAASAAYF), 415–435 (GLYGMLAFAILAVFIAGLMIG), 453–473 (VALVILATPALVLAGTAVAVL), 519–539 (VLLGLAMWFGRYTIIVAILAL), and 562–582 (LFVALLVGAVLLVGALTYVPA).

It belongs to the KdpA family. The system is composed of three essential subunits: KdpA, KdpB and KdpC.

Its subcellular location is the cell inner membrane. Its function is as follows. Part of the high-affinity ATP-driven potassium transport (or Kdp) system, which catalyzes the hydrolysis of ATP coupled with the electrogenic transport of potassium into the cytoplasm. This subunit binds the periplasmic potassium ions and delivers the ions to the membrane domain of KdpB through an intramembrane tunnel. The sequence is that of Potassium-transporting ATPase potassium-binding subunit from Bordetella pertussis (strain Tohama I / ATCC BAA-589 / NCTC 13251).